A 312-amino-acid chain; its full sequence is Ribonuclease Z (312 aa).

Zn(2+) is bound by residues H63, H65, D67, H68, H140, D211, and H269. Catalysis depends on D67, which acts as the Proton acceptor.

It belongs to the RNase Z family. In terms of assembly, homodimer. Zn(2+) is required as a cofactor.

The catalysed reaction is Endonucleolytic cleavage of RNA, removing extra 3' nucleotides from tRNA precursor, generating 3' termini of tRNAs. A 3'-hydroxy group is left at the tRNA terminus and a 5'-phosphoryl group is left at the trailer molecule.. Its function is as follows. Zinc phosphodiesterase, which displays some tRNA 3'-processing endonuclease activity. Probably involved in tRNA maturation, by removing a 3'-trailer from precursor tRNA. This chain is Ribonuclease Z, found in Shouchella clausii (strain KSM-K16) (Alkalihalobacillus clausii).